We begin with the raw amino-acid sequence, 496 residues long: Aspartyl/glutamyl-tRNA(Asn/Gln) amidotransferase subunit B (496 aa).

It belongs to the GatB/GatE family. GatB subfamily. Heterotrimer of A, B and C subunits.

It catalyses the reaction L-glutamyl-tRNA(Gln) + L-glutamine + ATP + H2O = L-glutaminyl-tRNA(Gln) + L-glutamate + ADP + phosphate + H(+). The catalysed reaction is L-aspartyl-tRNA(Asn) + L-glutamine + ATP + H2O = L-asparaginyl-tRNA(Asn) + L-glutamate + ADP + phosphate + 2 H(+). Its function is as follows. Allows the formation of correctly charged Asn-tRNA(Asn) or Gln-tRNA(Gln) through the transamidation of misacylated Asp-tRNA(Asn) or Glu-tRNA(Gln) in organisms which lack either or both of asparaginyl-tRNA or glutaminyl-tRNA synthetases. The reaction takes place in the presence of glutamine and ATP through an activated phospho-Asp-tRNA(Asn) or phospho-Glu-tRNA(Gln). The polypeptide is Aspartyl/glutamyl-tRNA(Asn/Gln) amidotransferase subunit B (Picosynechococcus sp. (strain ATCC 27264 / PCC 7002 / PR-6) (Agmenellum quadruplicatum)).